We begin with the raw amino-acid sequence, 347 residues long: Phenylalanine--tRNA ligase alpha subunit (347 aa).

Position 261 (Glu-261) interacts with Mg(2+).

The protein belongs to the class-II aminoacyl-tRNA synthetase family. Phe-tRNA synthetase alpha subunit type 1 subfamily. In terms of assembly, tetramer of two alpha and two beta subunits. Requires Mg(2+) as cofactor.

The protein localises to the cytoplasm. The enzyme catalyses tRNA(Phe) + L-phenylalanine + ATP = L-phenylalanyl-tRNA(Phe) + AMP + diphosphate + H(+). The chain is Phenylalanine--tRNA ligase alpha subunit from Streptococcus pyogenes serotype M18 (strain MGAS8232).